The primary structure comprises 634 residues: Dynein axonemal assembly factor 1 (634 aa).

Positions 1-80 (MHPEVSEPPV…SRDDREDRGP (80 aa)) are disordered. The segment covering 22–42 (AGDHGDAGPGIRKEEISETKE) has biased composition (basic and acidic residues). A compositionally biased stretch (polar residues) spans 48–62 (CTTSCPSQQQPSGDN). The span at 70 to 80 (HSRDDREDRGP) shows a compositional bias: basic and acidic residues. LRR repeat units lie at residues 101–123 (ALND…EEYT), 124–145 (GLRC…QAQS), 146–167 (ELRC…EPLQ), 168–189 (KLDA…SCLP), 190–211 (VLNT…EHLR), and 215–236 (RLCV…SVLE). Positions 249–288 (NPVTKHIPNYRRTVTVRLKHLTYLDDRPVFPKDRACAEAW) constitute an LRRCT domain. Positions 326–336 (EERKKARDRGE) are enriched in basic and acidic residues. The disordered stretch occupies residues 326–358 (EERKKARDRGETPLPDSEGSIPTSPEAEEKQPM). Serine 349 carries the post-translational modification Phosphoserine. Threonine 462 bears the Phosphothreonine mark. Phosphoserine occurs at positions 465 and 488. Disordered stretches follow at residues 481–505 (ISSL…ATPT) and 559–634 (ELND…FGLD).

This sequence belongs to the DNAAF1 family.

It localises to the cell projection. The protein resides in the cilium. Its function is as follows. Cilium-specific protein required for the stability of the ciliary architecture. Plays a role in cytoplasmic preassembly of dynein arms. Involved in regulation of microtubule-based cilia and actin-based brush border microvilli. The polypeptide is Dynein axonemal assembly factor 1 (Dnaaf1) (Mus musculus (Mouse)).